We begin with the raw amino-acid sequence, 59 residues long: Small ribosomal subunit protein bS21 (59 aa).

The disordered stretch occupies residues 40–59 (KPSVKRKKKSEAARKRKSFR). The segment covering 43–59 (VKRKKKSEAARKRKSFR) has biased composition (basic residues).

The protein belongs to the bacterial ribosomal protein bS21 family.

This chain is Small ribosomal subunit protein bS21, found in Desulforamulus reducens (strain ATCC BAA-1160 / DSM 100696 / MI-1) (Desulfotomaculum reducens).